The primary structure comprises 260 residues: Ribosomal RNA small subunit methyltransferase J (260 aa).

S-adenosyl-L-methionine-binding positions include 125–126 (ER) and Asp179.

Belongs to the methyltransferase superfamily. RsmJ family.

The protein localises to the cytoplasm. The catalysed reaction is guanosine(1516) in 16S rRNA + S-adenosyl-L-methionine = N(2)-methylguanosine(1516) in 16S rRNA + S-adenosyl-L-homocysteine + H(+). Its function is as follows. Specifically methylates the guanosine in position 1516 of 16S rRNA. The polypeptide is Ribosomal RNA small subunit methyltransferase J (Pseudomonas fluorescens (strain ATCC BAA-477 / NRRL B-23932 / Pf-5)).